The following is a 417-amino-acid chain: GTP-binding protein YPT11 (417 aa).

Positions 1–34 (MSQRKRYSLNVVTSPSIPSPTPSAPIRTNESNWE) are disordered. GTP-binding positions include 97–104 (GDANVGKT), 228–232 (DTAGQ), and 292–295 (NKID). Residues Cys415 and Cys416 are each lipidated (S-geranylgeranyl cysteine).

It belongs to the small GTPase superfamily. Rab family. As to quaternary structure, interacts with MYO2 (via C-terminal tail domain). Interacts with YIF1, YIP3, YIP4 and YIP5.

The protein localises to the endoplasmic reticulum membrane. It localises to the bud tip. The protein resides in the bud neck. Its function is as follows. Involved in the positive control of both endoplasmic reticulum (ER) and mitochondrion inheritance during cell divison. Required for the MYO2-dependent retention of newly inherited mitochondria at the bud tip in developing daughter cells. In Saccharomyces cerevisiae (strain RM11-1a) (Baker's yeast), this protein is GTP-binding protein YPT11 (YPT11).